Consider the following 42-residue polypeptide: Cytochrome b6-f complex subunit 7 (42 aa).

The helical transmembrane segment at 15–35 threads the bilayer; that stretch reads IVTAAVTCIFMVLFGLSLGFA.

This sequence belongs to the PetM family. The 4 large subunits of the cytochrome b6-f complex are cytochrome b6, subunit IV (17 kDa polypeptide, PetD), cytochrome f and the Rieske protein, while the 4 small subunits are PetG, PetL, PetM and PetN. The complex functions as a dimer.

The protein localises to the plastid. Its subcellular location is the chloroplast thylakoid membrane. In terms of biological role, component of the cytochrome b6-f complex, which mediates electron transfer between photosystem II (PSII) and photosystem I (PSI), cyclic electron flow around PSI, and state transitions. The protein is Cytochrome b6-f complex subunit 7 of Trieres chinensis (Marine centric diatom).